The primary structure comprises 464 residues: D-2-hydroxyglutarate dehydrogenase (464 aa).

The region spanning 37 to 216 is the FAD-binding PCMH-type domain; the sequence is FAPAPSAIVF…VEATMRLERQ (180 aa). Positions 325, 329, and 339 each coordinate (R)-2-hydroxyglutarate. Residues Arg325, Ser329, and Lys339 each contribute to the (R)-malate site. Positions 374 and 381 each coordinate Zn(2+). Residue Asn383 coordinates (R)-2-hydroxyglutarate. Glu420 contributes to the Zn(2+) binding site. His421 is a (R)-2-hydroxyglutarate binding site. Residue His421 participates in (R)-malate binding.

The protein belongs to the FAD-binding oxidoreductase/transferase type 4 family. In terms of assembly, homodimer. FAD serves as cofactor.

The enzyme catalyses (R)-2-hydroxyglutarate + A = 2-oxoglutarate + AH2. The catalysed reaction is (R)-malate + A = oxaloacetate + AH2. Its activity is regulated as follows. Activated by Zn(2+) ions at low concentrations (10 uM) and inhibited by Zn(2+), Fe(2+) and Ni(2+) at high concentrations (10 mM). Catalyzes the dehydrogenation of (R)-2-hydroxyglutarate (D-2-hydroxyglutarate or D-2-HG) to 2-oxoglutarate and of (R)-malate (D-malate) to oxaloacetate. Is functionally tied to L-serine biosynthesis, via its coupling with the D-3-phosphoglycerate dehydrogenase SerA, encoded by the adjacent gene in the locus. Is required for the utilization of D-2-hydroxyglutarate as well as D-malate as the sole carbon source for growth of P.stutzeri. Active in vitro with artificial electron acceptors such as 2,6-dichlorophenolindophenol (DCPIP) and appears to couple with electron transfer flavoprotein (ETF) for efficient oxidation of both D-2-hydroxyglutarate and D-malate in vivo. Cannot catalyze the oxidation of L-2-hydroxyglutarate, D-lactate, D-tartrate, D-2-hydroxybutanoate, D-mandelate, D-glycerate and D-phenyllactate. The sequence is that of D-2-hydroxyglutarate dehydrogenase from Stutzerimonas stutzeri (strain A1501) (Pseudomonas stutzeri).